A 715-amino-acid polypeptide reads, in one-letter code: Putative pentatricopeptide repeat-containing protein At3g23330 (715 aa).

PPR repeat units follow at residues 38-68 (SHTS…LKSP), 69-103 (PVLA…GRCP), 104-138 (DHNV…GMDC), 139-172 (DLYT…MPQR), 206-240 (DVVS…DLKP), 241-275 (DSFT…GIDS), 276-306 (DVYI…LYCR), 307-341 (DGIS…KVKP), 342-376 (GAVA…GFGS), 377-407 (NIFI…MNVL), 408-442 (DEVS…GVKP), 443-473 (NQVA…MTKV), and 479-509 (ELEH…MCVE). The segment at 514-589 (VWSTLLSSCS…KPACSWIEMK (76 aa)) is type E motif. Positions 590–620 (NKTHGFVSGDRSHPSMDKINEFLKAVMEQME) are type E(+) motif. The segment at 621 to 715 (KEGYVADTSG…RGNCSCGDYW (95 aa)) is type DYW motif.

This sequence belongs to the PPR family. PCMP-H subfamily.

This chain is Putative pentatricopeptide repeat-containing protein At3g23330 (PCMP-H32), found in Arabidopsis thaliana (Mouse-ear cress).